The chain runs to 345 residues: Anthranilate phosphoribosyltransferase (345 aa).

5-phospho-alpha-D-ribose 1-diphosphate-binding positions include Gly-80, 83–84 (GD), Thr-88, 90–93 (NIST), 108–116 (KHGNRSVTS), and Ser-120. Gly-80 provides a ligand contact to anthranilate. A Mg(2+)-binding site is contributed by Ser-92. Asn-111 lines the anthranilate pocket. Arg-166 provides a ligand contact to anthranilate. Positions 229 and 230 each coordinate Mg(2+).

It belongs to the anthranilate phosphoribosyltransferase family. In terms of assembly, homodimer. Mg(2+) serves as cofactor.

It catalyses the reaction N-(5-phospho-beta-D-ribosyl)anthranilate + diphosphate = 5-phospho-alpha-D-ribose 1-diphosphate + anthranilate. It functions in the pathway amino-acid biosynthesis; L-tryptophan biosynthesis; L-tryptophan from chorismate: step 2/5. Its function is as follows. Catalyzes the transfer of the phosphoribosyl group of 5-phosphorylribose-1-pyrophosphate (PRPP) to anthranilate to yield N-(5'-phosphoribosyl)-anthranilate (PRA). This is Anthranilate phosphoribosyltransferase from Chlorobium phaeobacteroides (strain BS1).